The primary structure comprises 155 residues: Snaclec bothrojaracin subunit alpha (155 aa).

The N-terminal stretch at 1–23 is a signal peptide; it reads MGRFLFVSFGLLVVFLSLSGTAA. Intrachain disulfides connect Cys-25–Cys-36, Cys-53–Cys-150, and Cys-125–Cys-142. The region spanning 32–151 is the C-type lectin domain; it reads HEGHCYKFFQ…CGQQNPFVCK (120 aa).

The protein belongs to the snaclec family. In terms of assembly, heterodimer of subunits alpha and beta; disulfide-linked. In terms of tissue distribution, expressed by the venom gland.

The protein resides in the secreted. Its function is as follows. This potent antithrombotic agent acts in a calcium-independent manner. Exerts its anticoagulant effect by two distinct mechanisms. It binds to activated thrombin through exosite 1, blocking fibrinogen clotting, platelet activation, factor V activation and other effects, and it interacts with prothrombin (F2), decreasing its proteolytic activation -especially in the presence of factor Va. In vivo, intravenous injection before thrombosis induction causes a significant decrease in thrombus weight. Furthermore, BJC shows a prolonged effect by remaining in the plasma bound to prothrombin for at least 12 hours. This chain is Snaclec bothrojaracin subunit alpha, found in Bothrops jararaca (Jararaca).